The sequence spans 428 residues: D-inositol 3-phosphate glycosyltransferase (428 aa).

Histidine 17 is a binding site for 1D-myo-inositol 3-phosphate. UDP-N-acetyl-alpha-D-glucosamine-binding positions include 23 to 24 (QP) and glycine 31. Residues 28–33 (DAGGMN), arginine 86, tyrosine 119, threonine 143, and arginine 163 each bind 1D-myo-inositol 3-phosphate. Arginine 237 and lysine 242 together coordinate UDP-N-acetyl-alpha-D-glucosamine. Mg(2+) is bound by residues tyrosine 312, arginine 313, and alanine 315. Residues glutamate 325 and glutamate 333 each coordinate UDP-N-acetyl-alpha-D-glucosamine. Position 339 (threonine 339) interacts with Mg(2+).

It belongs to the glycosyltransferase group 1 family. MshA subfamily. In terms of assembly, homodimer.

The catalysed reaction is 1D-myo-inositol 3-phosphate + UDP-N-acetyl-alpha-D-glucosamine = 1D-myo-inositol 2-acetamido-2-deoxy-alpha-D-glucopyranoside 3-phosphate + UDP + H(+). Functionally, catalyzes the transfer of a N-acetyl-glucosamine moiety to 1D-myo-inositol 3-phosphate to produce 1D-myo-inositol 2-acetamido-2-deoxy-glucopyranoside 3-phosphate in the mycothiol biosynthesis pathway. The chain is D-inositol 3-phosphate glycosyltransferase from Thermobispora bispora (strain ATCC 19993 / DSM 43833 / CBS 139.67 / JCM 10125 / KCTC 9307 / NBRC 14880 / R51).